A 169-amino-acid polypeptide reads, in one-letter code: Crossover junction endodeoxyribonuclease RuvC (169 aa).

Active-site residues include D11, E71, and D143. 3 residues coordinate Mg(2+): D11, E71, and D143.

Belongs to the RuvC family. In terms of assembly, homodimer which binds Holliday junction (HJ) DNA. The HJ becomes 2-fold symmetrical on binding to RuvC with unstacked arms; it has a different conformation from HJ DNA in complex with RuvA. In the full resolvosome a probable DNA-RuvA(4)-RuvB(12)-RuvC(2) complex forms which resolves the HJ. The cofactor is Mg(2+).

The protein resides in the cytoplasm. It catalyses the reaction Endonucleolytic cleavage at a junction such as a reciprocal single-stranded crossover between two homologous DNA duplexes (Holliday junction).. Functionally, the RuvA-RuvB-RuvC complex processes Holliday junction (HJ) DNA during genetic recombination and DNA repair. Endonuclease that resolves HJ intermediates. Cleaves cruciform DNA by making single-stranded nicks across the HJ at symmetrical positions within the homologous arms, yielding a 5'-phosphate and a 3'-hydroxyl group; requires a central core of homology in the junction. The consensus cleavage sequence is 5'-(A/T)TT(C/G)-3'. Cleavage occurs on the 3'-side of the TT dinucleotide at the point of strand exchange. HJ branch migration catalyzed by RuvA-RuvB allows RuvC to scan DNA until it finds its consensus sequence, where it cleaves and resolves the cruciform DNA. In Rhizobium leguminosarum bv. trifolii (strain WSM2304), this protein is Crossover junction endodeoxyribonuclease RuvC.